Consider the following 598-residue polypeptide: 2-succinyl-5-enolpyruvyl-6-hydroxy-3-cyclohexene-1-carboxylate synthase (598 aa).

Belongs to the TPP enzyme family. MenD subfamily. As to quaternary structure, homodimer. Requires Mg(2+) as cofactor. Mn(2+) is required as a cofactor. The cofactor is thiamine diphosphate.

The enzyme catalyses isochorismate + 2-oxoglutarate + H(+) = 5-enolpyruvoyl-6-hydroxy-2-succinyl-cyclohex-3-ene-1-carboxylate + CO2. It participates in quinol/quinone metabolism; 1,4-dihydroxy-2-naphthoate biosynthesis; 1,4-dihydroxy-2-naphthoate from chorismate: step 2/7. Its pathway is cofactor biosynthesis; phylloquinone biosynthesis. Functionally, catalyzes the thiamine diphosphate-dependent decarboxylation of 2-oxoglutarate and the subsequent addition of the resulting succinic semialdehyde-thiamine pyrophosphate anion to isochorismate to yield 2-succinyl-5-enolpyruvyl-6-hydroxy-3-cyclohexene-1-carboxylate (SEPHCHC). This Prochlorococcus marinus (strain NATL2A) protein is 2-succinyl-5-enolpyruvyl-6-hydroxy-3-cyclohexene-1-carboxylate synthase.